A 521-amino-acid polypeptide reads, in one-letter code: GMP synthase [glutamine-hydrolyzing] (521 aa).

The 193-residue stretch at 5–197 folds into the Glutamine amidotransferase type-1 domain; sequence KILILDFGSQ…VLDICGAQPG (193 aa). Cys-81 serves as the catalytic Nucleophile. Active-site residues include His-171 and Glu-173. The GMPS ATP-PPase domain occupies 198 to 390; that stretch reads WTMPNYIEEA…LGLPREMVYR (193 aa). Residue 225–231 coordinates ATP; sequence SGGVDSS.

As to quaternary structure, homodimer.

It catalyses the reaction XMP + L-glutamine + ATP + H2O = GMP + L-glutamate + AMP + diphosphate + 2 H(+). It participates in purine metabolism; GMP biosynthesis; GMP from XMP (L-Gln route): step 1/1. Its function is as follows. Catalyzes the synthesis of GMP from XMP. The sequence is that of GMP synthase [glutamine-hydrolyzing] from Neisseria gonorrhoeae (strain ATCC 700825 / FA 1090).